The primary structure comprises 249 residues: Probable septum site-determining protein MinC (249 aa).

The disordered stretch occupies residues 89-130 (SLFEPGMPPAMKGGRPAPDFEVPEVDPADPPKAGKGKAAAPI). The span at 119–129 (PKAGKGKAAAP) shows a compositional bias: low complexity.

Belongs to the MinC family. Interacts with MinD and FtsZ.

Functionally, cell division inhibitor that blocks the formation of polar Z ring septums. Rapidly oscillates between the poles of the cell to destabilize FtsZ filaments that have formed before they mature into polar Z rings. Prevents FtsZ polymerization. This chain is Probable septum site-determining protein MinC, found in Rhizobium meliloti (strain 1021) (Ensifer meliloti).